The sequence spans 141 residues: Transcription antitermination protein NusB (141 aa).

The protein belongs to the NusB family.

Involved in transcription antitermination. Required for transcription of ribosomal RNA (rRNA) genes. Binds specifically to the boxA antiterminator sequence of the ribosomal RNA (rrn) operons. In Desulfotalea psychrophila (strain LSv54 / DSM 12343), this protein is Transcription antitermination protein NusB.